A 140-amino-acid chain; its full sequence is Midkine (140 aa).

The N-terminal stretch at 1–20 (MQHRSFFLLALVALLAVTTA) is a signal peptide. Intrachain disulfides connect cysteine 34-cysteine 58, cysteine 42-cysteine 67, cysteine 49-cysteine 71, cysteine 81-cysteine 113, and cysteine 91-cysteine 123.

Belongs to the pleiotrophin family. In terms of assembly, homodimer. Interacts with ALK. Interacts with LRP1; promotes neuronal survival. Interacts with LRP2. Interacts with NCAM1. Interacts (via C-terminal) with PTPRZ1 (via chondroitin sulfate chains); this interaction is inhibited by PTN; this interaction promotes neuronal migration. Interacts with NCL; this interaction promotes NCL clustering and lateral movements of this complex into lipid rafts leading to MDK internalization. Interacts with LRP6 and LRP8: this interaction is calcium dependent. Interacts with ITGA4. Interacts with ITGA6. Interacts with ITGB1. Interacts with ITGA4:ITGB1 complex; this interaction mediates MDK-induced osteoblast cells migration through PXN phosphorylation. Interacts with ITGA6:ITGB1 complex; this interaction mediates MDK-induced neurite outgrowth. Interacts with NOTCH2; this interactio mediates a nuclear accumulation of NOTCH2 and therefore activation of NOTCH2 signaling leading to interaction between HES1 and STAT3. Interacts with GPC2 (via heparan sulfate chain); this interaction is inhibited by heparin followed by chondroitin sulfate E; this interaction induces GPC2 clustering through heparan sulfate chain; this interaction induces neuronal cell adhesion and neurite outgrowth. Interacts with SDC3; this interaction induces SDC3 clustering; this interaction induces neuronal cell adhesion and neurite outgrowth. Interacts with SDC1. Interacts with CSPG5; this interaction promotes elongation of oligodendroglial precursor-like cells. As to expression, expressed at a low level in arteries, and at higher levels in newly formed neointima. In brain, expressed in the caudate nucleus and the brain stem.

It is found in the secreted. Functionally, developmentally regulated, secreted growth factor homologous to pleiotrophin (PTN), which has heparin binding activity. Binds anaplastic lymphoma kinase (ALK) which induces ALK activation and subsequent phosphorylation of the insulin receptor substrate (IRS1), followed by the activation of mitogen-activated protein kinase (MAPK) and PI3-kinase, and the induction of cell proliferation. Involved in neointima formation after arterial injury, possibly by mediating leukocyte recruitment. Also involved in early fetal adrenal gland development. Its function is as follows. Secreted protein that functions as a cytokine and growth factor and mediates its signal through cell-surface proteoglycan and non-proteoglycan receptors. Binds cell-surface proteoglycan receptors via their chondroitin sulfate (CS) groups. Thereby regulates many processes like inflammatory response, cell proliferation, cell adhesion, cell growth, cell survival, tissue regeneration, cell differentiation and cell migration. Participates in inflammatory processes by exerting two different activities. Firstly, mediates neutrophils and macrophages recruitment to the sites of inflammation both by direct action by cooperating namely with ITGB2 via LRP1 and by inducing chemokine expression. This inflammation can be accompanied by epithelial cell survival and smooth muscle cell migration after renal and vessel damage, respectively. Secondly, suppresses the development of tolerogenic dendric cells thereby inhibiting the differentiation of regulatory T cells and also promote T cell expansion through NFAT signaling and Th1 cell differentiation. Promotes tissue regeneration after injury or trauma. After heart damage negatively regulates the recruitment of inflammatory cells and mediates cell survival through activation of anti-apoptotic signaling pathways via MAPKs and AKT pathways through the activation of angiogenesis. Also facilitates liver regeneration as well as bone repair by recruiting macrophage at trauma site and by promoting cartilage development by facilitating chondrocyte differentiation. Plays a role in brain by promoting neural precursor cells survival and growth through interaction with heparan sulfate proteoglycans. Binds PTPRZ1 and promotes neuronal migration and embryonic neurons survival. Binds SDC3 or GPC2 and mediates neurite outgrowth and cell adhesion. Binds chondroitin sulfate E and heparin leading to inhibition of neuronal cell adhesion induced by binding with GPC2. Binds CSPG5 and promotes elongation of oligodendroglial precursor-like cells. Also binds ITGA6:ITGB1 complex; this interaction mediates MDK-induced neurite outgrowth. Binds LRP1; promotes neuronal survival. Binds ITGA4:ITGB1 complex; this interaction mediates MDK-induced osteoblast cells migration through PXN phosphorylation. Binds anaplastic lymphoma kinase (ALK) which induces ALK activation and subsequent phosphorylation of the insulin receptor substrate (IRS1), followed by the activation of mitogen-activated protein kinase (MAPK) and PI3-kinase, and the induction of cell proliferation. Promotes epithelial to mesenchymal transition through interaction with NOTCH2. During arteriogenesis, plays a role in vascular endothelial cell proliferation by inducing VEGFA expression and release which in turn induces nitric oxide synthase expression. Moreover activates vasodilation through nitric oxide synthase activation. Negatively regulates bone formation in response to mechanical load by inhibiting Wnt/beta-catenin signaling in osteoblasts. In addition plays a role in hippocampal development, working memory, auditory response, early fetal adrenal gland development and the female reproductive system. The polypeptide is Midkine (Rattus norvegicus (Rat)).